The sequence spans 49 residues: NLCERASLTWTGNCGNTGHCDTQCRNWESAKHGACHKRGNWKCFCYFNC.

4 disulfide bridges follow: Cys3/Cys49, Cys14/Cys35, Cys20/Cys43, and Cys24/Cys45.

Belongs to the DEFL family.

Its subcellular location is the secreted. In terms of biological role, possesses antimicrobial activity sensitive to inorganic cations. Binds specifically to the fungal plasma membrane. Has no inhibitory effect on insect gut alpha-amylase. The polypeptide is Defensin-like protein 1 (Clitoria ternatea (Butterfly pea)).